The primary structure comprises 138 residues: MAEKLKVDLVTPYKKILSEEVDEITATGALGEFSVLPGHAPFLTSLKIGELTYKKGGQFFHLAVNWGYFEVEDDKVTVLVETAERADEIDLERAKAALGRAEAALKGLSPEDKSYKTQEAALERALIRMQVAGKSTRK.

Belongs to the ATPase epsilon chain family. F-type ATPases have 2 components, CF(1) - the catalytic core - and CF(0) - the membrane proton channel. CF(1) has five subunits: alpha(3), beta(3), gamma(1), delta(1), epsilon(1). CF(0) has three main subunits: a, b and c.

The protein localises to the cell inner membrane. Produces ATP from ADP in the presence of a proton gradient across the membrane. The protein is ATP synthase epsilon chain of Geobacter metallireducens (strain ATCC 53774 / DSM 7210 / GS-15).